The sequence spans 67 residues: Small ribosomal subunit protein eS27 (67 aa).

Residues Cys22, Cys25, Cys41, and Cys44 each coordinate Zn(2+). The C4-type zinc finger occupies 22–44; the sequence is CPDCGNEQITFSHAAMVVRCLVC.

This sequence belongs to the eukaryotic ribosomal protein eS27 family. Part of the 30S ribosomal subunit. Requires Zn(2+) as cofactor.

The protein is Small ribosomal subunit protein eS27 of Pyrobaculum aerophilum (strain ATCC 51768 / DSM 7523 / JCM 9630 / CIP 104966 / NBRC 100827 / IM2).